The following is a 209-amino-acid chain: tRNA (guanine-N(7)-)-methyltransferase (209 aa).

Residues Glu40, Glu65, and Asp114 each coordinate S-adenosyl-L-methionine. Asp114 is a catalytic residue. Substrate-binding positions include Asp150 and 188–191; that span reads TAFE.

It belongs to the class I-like SAM-binding methyltransferase superfamily. TrmB family.

It catalyses the reaction guanosine(46) in tRNA + S-adenosyl-L-methionine = N(7)-methylguanosine(46) in tRNA + S-adenosyl-L-homocysteine. Its pathway is tRNA modification; N(7)-methylguanine-tRNA biosynthesis. Functionally, catalyzes the formation of N(7)-methylguanine at position 46 (m7G46) in tRNA. The polypeptide is tRNA (guanine-N(7)-)-methyltransferase (Bdellovibrio bacteriovorus (strain ATCC 15356 / DSM 50701 / NCIMB 9529 / HD100)).